Here is a 233-residue protein sequence, read N- to C-terminus: MQQLYDFYILHQCKYKENSLLVSIFTREFGKISGLIRVNKKTINLYQPLVKLRGQISLAKKSDGLSKIYNVEFVESFYQNTYINLLSLQYMNELIYLLLSYSHEEEFLFEKYGFILKNINEINYKYLLRMFELELLDSLGQGVYVDCDIDGMLIDESLSYSILATGFKKNLSTIPNSIAGKNLLKINQSVSLWTDEDLKAISKVTRAYIDYALAGKQLRSRKLLIDYLNLGKK.

It belongs to the RecO family.

Involved in DNA repair and RecF pathway recombination. In Francisella philomiragia subsp. philomiragia (strain ATCC 25017 / CCUG 19701 / FSC 153 / O#319-036), this protein is DNA repair protein RecO.